A 698-amino-acid chain; its full sequence is MASFAQVINPMTGQNTWQERGDDYDYHQEVANAGFGDMLHDWERNQKYDAAIRKTIAGMRQAGKQVHVLDIGTGTGILAMMALRAGADTVTACEAFVPMANCAARILAANDAAHVRLIRKRSTDIVMGVDMPHRANLLVAELLDTELIGEGAIGIYNHAHEELLTDDALCIPARATCYAQVAQSPLASQWNSLKILPDLDGDILLRPPTQLLQCSGEAALHDVQLSQLPPHSFHVLSEPTQIFHFDFQRKQPLELMRENVVRVQLSRPGSVELVFYWWQIELDDAGEQLLSCAPYWAHPELEQLKATCKDKQRPLANIVPWRDHWMQAIYYIPKALHLHDAGEEFWLRCYHDEYSLWFDAHKEQPEKPARRHSCTCDLHMTYTRNRIGQLNQSIRNKRYLAYLEQAVQSKSAHVLVMGDGCLLGLASAALGAASVYCLEPHRFSRRLLESVVKHNQLKNVKFLDSLKQLEPNELDTITHIFAEPYFLNSILPWDNFYFGTLLLQLEQLHQKLPANVEISPCAARIFALPVEFLDLHKIRAPIVSCEGFDLRLFDDMVQRSAEQALSQVEAQPLWEYPCRALAQPQQLLSVDFANFGVEQSNHGSIKLTAEGNCNGIALWVDWQLSPNENPKSIVSSGPLEPVETGQYVKWDMFVRQGVHFINQTTAEKKYLNWSTQFRPLLGELNFNFSLNANREKSE.

SAM-dependent MTase PRMT-type domains are found at residues 14–357 and 366–698; these read QNTW…YSLW and EKPA…EKSE.

The protein belongs to the class I-like SAM-binding methyltransferase superfamily. Protein arginine N-methyltransferase family. PRMT7 subfamily.

Essential arginine methyltransferase that can both catalyze the formation of omega-N monomethylarginine (MMA) and symmetrical dimethylarginine (sDMA). Specifically mediates the symmetrical dimethylation of arginine residues in the small nuclear ribonucleoproteins SmD1 and SmD3. The chain is Protein arginine N-methyltransferase 7 (Art7) from Drosophila mojavensis (Fruit fly).